Consider the following 233-residue polypeptide: Orotidine 5'-phosphate decarboxylase (233 aa).

Substrate-binding positions include Asp11, Lys34, 61 to 70 (DLKLHDIPNT), Thr117, Arg179, Gln188, Gly208, and Arg209. The active-site Proton donor is the Lys63.

This sequence belongs to the OMP decarboxylase family. Type 1 subfamily. In terms of assembly, homodimer.

It catalyses the reaction orotidine 5'-phosphate + H(+) = UMP + CO2. Its pathway is pyrimidine metabolism; UMP biosynthesis via de novo pathway; UMP from orotate: step 2/2. Catalyzes the decarboxylation of orotidine 5'-monophosphate (OMP) to uridine 5'-monophosphate (UMP). This is Orotidine 5'-phosphate decarboxylase from Streptococcus pneumoniae (strain CGSP14).